The sequence spans 300 residues: TLR adapter interacting with SLC15A4 on the lysosome (300 aa).

The short motif at 289–293 (SLHIS) is the pLxIS motif element. Residue Ser293 is modified to Phosphoserine.

As to quaternary structure, interacts (via pLxIS motif) with IRF5; leading to IRF5 activation. Interacts with SLC15A4; leading to its recruitment to endolysosome. In terms of processing, the phosphorylated pLxIS motif constitutes an IRF5-binding motif, leading to recruitment of the transcription factor IRF5 to induce type-I interferons and other cytokines.

The protein resides in the lysosome membrane. Its subcellular location is the endosome membrane. It is found in the nucleus. The protein localises to the cytoplasm. Functionally, innate immune adapter that mediates the recruitment and activation of IRF5 downstream of endolysosomal toll-like receptors TLR7, TLR8 and TLR9. Following recruitment to endolysosome by SLC15A4 downstream of TLR7, TLR8 and TLR9, specifically recruits IRF5 transcription factor via its pLxIS motif, leading to IRF5 activation and subsequent expression of type I interferons. Plays a role in the regulation of endolysosomal pH in immune cells such as B-cells, dendritic cells and monocytes. The sequence is that of TLR adapter interacting with SLC15A4 on the lysosome from Bos taurus (Bovine).